The chain runs to 173 residues: Photosystem I assembly protein Ycf3 (173 aa).

TPR repeat units follow at residues 35-68 (AYVYYRDGLSAQNDGDYAEALENYEESLKLEENP), 72-105 (GETLKNMAIIYMSNGEEDRALATYQKALDENPKQ), and 120-153 (GRTAEEEGRRDDADGWFDQAAEVWTQAVRLNPGG).

This sequence belongs to the Ycf3 family.

It is found in the cellular thylakoid membrane. Essential for the assembly of the photosystem I (PSI) complex. May act as a chaperone-like factor to guide the assembly of the PSI subunits. The chain is Photosystem I assembly protein Ycf3 from Synechococcus sp. (strain WH7803).